Reading from the N-terminus, the 95-residue chain is Protein TusB (95 aa).

Belongs to the DsrH/TusB family. As to quaternary structure, heterohexamer, formed by a dimer of trimers. The hexameric TusBCD complex contains 2 copies each of TusB, TusC and TusD. The TusBCD complex interacts with TusE.

The protein resides in the cytoplasm. Functionally, part of a sulfur-relay system required for 2-thiolation of 5-methylaminomethyl-2-thiouridine (mnm(5)s(2)U) at tRNA wobble positions. The polypeptide is Protein TusB (Photorhabdus laumondii subsp. laumondii (strain DSM 15139 / CIP 105565 / TT01) (Photorhabdus luminescens subsp. laumondii)).